Here is a 367-residue protein sequence, read N- to C-terminus: Putative ionic transporter y4hA (367 aa).

11 helical membrane-spanning segments follow: residues 12–32, 39–59, 74–94, 108–128, 143–163, 172–192, 221–241, 249–269, 291–311, 318–338, and 347–367; these read VPLWSWIIPLFGCVIAAMTLA, SVVLLLMSAGLLTGAVFASVH, AILLAVCVTIIEVAIIGSLML, VFAAVMIVLNGVIGLCLVLGG, AALAVLGTLATLSLVLPNFVT, AIQLVVIGLVSVVLYGVFLFV, LAAGALLVLALIAVILLAMLL, VEALGLPQAVVGVTIAGVVLL, VLGSALASIGVTIPVVAAISV, ALGLAPQNLIMLILTLFVGTI, and VLQGAVHLAIFTVFLLLSAIP.

The protein belongs to the Ca(2+):cation antiporter (CaCA) (TC 2.A.19) family.

Its subcellular location is the cell membrane. Possible cation transporter. The sequence is that of Putative ionic transporter y4hA from Sinorhizobium fredii (strain NBRC 101917 / NGR234).